The primary structure comprises 552 residues: HTH-type transcriptional regulator SgrR (552 aa).

In terms of domain architecture, HTH marR-type spans 1-116 (MPSARLQQQF…LVSHLGRSFR (116 aa)). A DNA-binding region (H-T-H motif) is located at residues 26-49 (LNELAALLSCSRRHMRTLLNTMQD). Residues 163–492 (ELEADIAHHW…IDWQVDAARW (330 aa)) are solute-binding.

Activates the small RNA gene sgrS under glucose-phosphate stress conditions as well as yfdZ. Represses its own transcription under both stress and non-stress conditions. Might act as a sensor of the intracellular accumulation of phosphoglucose by binding these molecules in its C-terminal solute-binding domain. This is HTH-type transcriptional regulator SgrR from Escherichia coli O157:H7.